Here is a 176-residue protein sequence, read N- to C-terminus: uncharacterized protein (176 aa).

Residues 1–12 (MRLPYSSSKPIP) show a composition bias toward polar residues. Disordered stretches follow at residues 1 to 88 (MRLP…PQQQ) and 109 to 132 (VNNSPIKTPSKKHRSSSKKSPSSS). The segment covering 13-24 (TNNNNNNNNTNN) has biased composition (low complexity). The segment covering 37–46 (SYYQTQENNK) has biased composition (polar residues). Over residues 47 to 88 (PQQSQQHPLLQHQQQQQQQQQQQQQQQQQQQQQQQQQQPQQQ) the composition is skewed to low complexity.

This is an uncharacterized protein from Dictyostelium discoideum (Social amoeba).